The sequence spans 148 residues: 6,7-dimethyl-8-ribityllumazine synthase (148 aa).

5-amino-6-(D-ribitylamino)uracil-binding positions include Phe-13, 44-46 (ALE), and 73-75 (MVI). Position 78–79 (78–79 (ET)) interacts with (2S)-2-hydroxy-3-oxobutyl phosphate. The Proton donor role is filled by His-81. 5-amino-6-(D-ribitylamino)uracil is bound at residue Asn-106. Arg-120 lines the (2S)-2-hydroxy-3-oxobutyl phosphate pocket.

The protein belongs to the DMRL synthase family.

The catalysed reaction is (2S)-2-hydroxy-3-oxobutyl phosphate + 5-amino-6-(D-ribitylamino)uracil = 6,7-dimethyl-8-(1-D-ribityl)lumazine + phosphate + 2 H2O + H(+). It functions in the pathway cofactor biosynthesis; riboflavin biosynthesis; riboflavin from 2-hydroxy-3-oxobutyl phosphate and 5-amino-6-(D-ribitylamino)uracil: step 1/2. Its function is as follows. Catalyzes the formation of 6,7-dimethyl-8-ribityllumazine by condensation of 5-amino-6-(D-ribitylamino)uracil with 3,4-dihydroxy-2-butanone 4-phosphate. This is the penultimate step in the biosynthesis of riboflavin. In Agrobacterium fabrum (strain C58 / ATCC 33970) (Agrobacterium tumefaciens (strain C58)), this protein is 6,7-dimethyl-8-ribityllumazine synthase.